The chain runs to 160 residues: MLHLTIVAVGRVREKYLVAGIEEYLKRLRPYARVRILEAPEEKVPDKPSPAGVEQILASEGRGIGRLIPPSSFTVALDREGVMLSSEELAGRLADLALAGKNEVALIIGGTLGLATFILQQADLRLSFSRFTFPHQLMRLILLEQLYRAFKIQRGETYHR.

Residues leucine 77 and glycine 109 each contribute to the S-adenosyl-L-methionine site.

The protein belongs to the RNA methyltransferase RlmH family. Homodimer.

Its subcellular location is the cytoplasm. It catalyses the reaction pseudouridine(1915) in 23S rRNA + S-adenosyl-L-methionine = N(3)-methylpseudouridine(1915) in 23S rRNA + S-adenosyl-L-homocysteine + H(+). Functionally, specifically methylates the pseudouridine at position 1915 (m3Psi1915) in 23S rRNA. This chain is Ribosomal RNA large subunit methyltransferase H, found in Moorella thermoacetica (strain ATCC 39073 / JCM 9320).